We begin with the raw amino-acid sequence, 313 residues long: HTH-type transcriptional regulator CbbR (313 aa).

Residues 1-61 (MRNVTFRQLR…DRTRGGMVPT (61 aa)) form the HTH lysR-type domain. Positions 21 to 40 (INLAAEALGLTGPALTLQIQ) form a DNA-binding region, H-T-H motif.

The protein belongs to the LysR transcriptional regulatory family.

In terms of biological role, transcriptional activator for the cbb operon for RuBisCO and other Calvin cycle genes. This Rhizobium meliloti (strain 1021) (Ensifer meliloti) protein is HTH-type transcriptional regulator CbbR (cbbR).